Consider the following 120-residue polypeptide: Ribosome-binding factor A (120 aa).

It belongs to the RbfA family. In terms of assembly, monomer. Binds 30S ribosomal subunits, but not 50S ribosomal subunits or 70S ribosomes.

It is found in the cytoplasm. Functionally, one of several proteins that assist in the late maturation steps of the functional core of the 30S ribosomal subunit. Associates with free 30S ribosomal subunits (but not with 30S subunits that are part of 70S ribosomes or polysomes). Required for efficient processing of 16S rRNA. May interact with the 5'-terminal helix region of 16S rRNA. This Clostridium botulinum (strain 657 / Type Ba4) protein is Ribosome-binding factor A.